The chain runs to 525 residues: Probable alpha-galactosidase A (525 aa).

Residues 1 to 17 (MHPSMTLLAILPPLVRA) form the signal peptide. The cysteines at positions 40 and 72 are disulfide-linked. N-linked (GlcNAc...) asparagine glycosylation is found at asparagine 43, asparagine 81, and asparagine 117. Cysteine 120 and cysteine 150 form a disulfide bridge. The active-site Nucleophile is aspartate 148. Asparagine 197 carries an N-linked (GlcNAc...) asparagine glycan. Aspartate 206 (proton donor) is an active-site residue. A Ricin B-type lectin domain is found at 402 to 525 (PPDCPMVIPT…GLPSGVDIEA (124 aa)). Disulfide bonds link cysteine 422–cysteine 434 and cysteine 459–cysteine 472.

It belongs to the glycosyl hydrolase 27 family.

It localises to the secreted. It carries out the reaction Hydrolysis of terminal, non-reducing alpha-D-galactose residues in alpha-D-galactosides, including galactose oligosaccharides, galactomannans and galactolipids.. Hydrolyzes a variety of simple alpha-D-galactoside as well as more complex molecules such as oligosaccharides and polysaccharides. This chain is Probable alpha-galactosidase A (aglA), found in Aspergillus clavatus (strain ATCC 1007 / CBS 513.65 / DSM 816 / NCTC 3887 / NRRL 1 / QM 1276 / 107).